A 910-amino-acid polypeptide reads, in one-letter code: Valine--tRNA ligase (910 aa).

Residues 46–56 (PNVTGSLHMGH) carry the 'HIGH' region motif. The short motif at 539–543 (KMSKS) is the 'KMSKS' region element. Lysine 542 lines the ATP pocket. A coiled-coil region spans residues 845 to 909 (DLDILRNKIQ…QMLQERLKML (65 aa)).

This sequence belongs to the class-I aminoacyl-tRNA synthetase family. ValS type 1 subfamily. As to quaternary structure, monomer.

The protein resides in the cytoplasm. It catalyses the reaction tRNA(Val) + L-valine + ATP = L-valyl-tRNA(Val) + AMP + diphosphate. Catalyzes the attachment of valine to tRNA(Val). As ValRS can inadvertently accommodate and process structurally similar amino acids such as threonine, to avoid such errors, it has a 'posttransfer' editing activity that hydrolyzes mischarged Thr-tRNA(Val) in a tRNA-dependent manner. The protein is Valine--tRNA ligase of Synechocystis sp. (strain ATCC 27184 / PCC 6803 / Kazusa).